A 470-amino-acid chain; its full sequence is Uronate isomerase (470 aa).

The protein belongs to the metallo-dependent hydrolases superfamily. Uronate isomerase family.

The enzyme catalyses D-glucuronate = D-fructuronate. The catalysed reaction is aldehydo-D-galacturonate = keto-D-tagaturonate. It participates in carbohydrate metabolism; pentose and glucuronate interconversion. In Shigella boydii serotype 4 (strain Sb227), this protein is Uronate isomerase.